The following is a 295-amino-acid chain: Non-selective voltage-gated ion channel VDAC2 (295 aa).

The ATP site is built by K24 and K32. Residue K32 is modified to N6-acetyllysine; alternate. Position 32 is an N6-succinyllysine; alternate (K32). A Glycyl lysine isopeptide (Lys-Gly) (interchain with G-Cter in ubiquitin); alternate cross-link involves residue K32. 2 beta stranded membrane passes run 38 to 47 and 51 to 59; these read LVKLDVKTKS and VEFSTSGSS. Residues K65 and K73 each participate in a glycyl lysine isopeptide (Lys-Gly) (interchain with G-Cter in ubiquitin) cross-link. A run of 4 beta stranded transmembrane segments spans residues 66–76, 81–88, 92–101, and 107–116; these read VSGTLETKYKW, LTFTEKWN, TLGTEIAIED, and LKLTFDTTFS. An N6-acetyllysine; alternate modification is found at K121. Residue K121 forms a Glycyl lysine isopeptide (Lys-Gly) (interchain with G-Cter in ubiquitin); alternate linkage. Glycyl lysine isopeptide (Lys-Gly) (interchain with G-Cter in ubiquitin) cross-links involve residues K122 and K125. Beta stranded transmembrane passes span 123–132, 135–142, 149–157, and 162–170; these read SGKIKSAYKR, INLGCDVD, AIHGSAVFG, and LAGYQMTFD. Residue K173 forms a Glycyl lysine isopeptide (Lys-Gly) (interchain with G-Cter in ubiquitin) linkage. The next 6 beta stranded transmembrane spans lie at 175–187, 190–197, 201–210, 214–223, 230–239, and 243–250; these read KLTRSNFAVGYRT, FQLHTNVN, EFGGSIYQKV, FDTSVNLAWT, RFGIAAKYQL, and ASISAKVN. S205 is modified (phosphoserine). Residue S252 is modified to Phosphoserine. Residues 254–256 and 272–276 each bind NAD(+); these read LIG and SALVD. The next 2 beta stranded transmembrane spans lie at 254-263 and 266-275; these read LIGVGYTQTL and GVKLTLSALV. K278 carries the post-translational modification N6-acetyllysine; alternate. K278 participates in a covalent cross-link: Glycyl lysine isopeptide (Lys-Gly) (interchain with G-Cter in ubiquitin); alternate. Residues 285-294 traverse the membrane as a beta stranded segment; the sequence is HKLGLALELE. A Glycyl lysine isopeptide (Lys-Gly) (interchain with G-Cter in ubiquitin) cross-link involves residue K286.

Belongs to the eukaryotic mitochondrial porin family. Monomer, homodimer and higher order oligomers; formation of higher order structures is necessary for scramblase activity. Interacts with ARMC12 in a TBC1D21-dependent manner. Interacts with KLC3. Interacts with SPATA33. Interacts with PPP3CC in a SPATA33-dependent manner. In terms of processing, ubiquitinated by PRKN during mitophagy, leading to its degradation and enhancement of mitophagy. Deubiquitinated by USP30.

It is found in the mitochondrion outer membrane. It localises to the membrane. The catalysed reaction is chloride(in) = chloride(out). It carries out the reaction K(+)(in) = K(+)(out). The enzyme catalyses a 1,2-diacyl-sn-glycero-3-phospho-L-serine(in) = a 1,2-diacyl-sn-glycero-3-phospho-L-serine(out). It catalyses the reaction a 1,2-diacyl-sn-glycero-3-phosphocholine(in) = a 1,2-diacyl-sn-glycero-3-phosphocholine(out). The catalysed reaction is a 1,2-diacyl-sn-glycero-3-phospho-(1D-myo-inositol)(in) = a 1,2-diacyl-sn-glycero-3-phospho-(1D-myo-inositol)(out). Functionally, non-selective voltage-gated ion channel that mediates the transport of anions and cations through the mitochondrion outer membrane and plasma membrane. The channel adopts an open conformation at zero mV and a closed conformation at both positive and negative potentials. There are two populations of channels; the main that functions in a lower open-state conductance with lower ion selectivity, that switch, in a voltage-dependent manner, from the open to a low-conducting 'closed' state and the other that has a normal ion selectivity in the typical high conductance, 'open' state. Binds various lipids, including the sphingolipid ceramide, the phospholipid phosphatidylcholine, and the sterols cholesterol and oxysterol. Binding of ceramide promotes the mitochondrial outer membrane permeabilization (MOMP) apoptotic pathway. Its function is as follows. Catalyzes the scrambling of phospholipids across the outer mitochondrial membrane; the mechanism is unrelated to channel activity and is capable of translocating both anionic and zwitterionic phospholipids. This is Non-selective voltage-gated ion channel VDAC2 from Mesocricetus auratus (Golden hamster).